We begin with the raw amino-acid sequence, 491 residues long: tRNA-2-methylthio-N(6)-dimethylallyladenosine synthase (491 aa).

Residues 54–172 (KTYHIKTFGC…ILNLLEQVIF (119 aa)) form the MTTase N-terminal domain. Residues Cys63, Cys99, Cys133, Cys209, Cys213, and Cys216 each contribute to the [4Fe-4S] cluster site. The region spanning 195 to 426 (RTNNLKGFVN…NEMVKTFSKK (232 aa)) is the Radical SAM core domain. Residues 429–491 (EKYVNKVLDV…RFTLNGKMID (63 aa)) enclose the TRAM domain.

Belongs to the methylthiotransferase family. MiaB subfamily. Monomer. [4Fe-4S] cluster is required as a cofactor.

Its subcellular location is the cytoplasm. It carries out the reaction N(6)-dimethylallyladenosine(37) in tRNA + (sulfur carrier)-SH + AH2 + 2 S-adenosyl-L-methionine = 2-methylsulfanyl-N(6)-dimethylallyladenosine(37) in tRNA + (sulfur carrier)-H + 5'-deoxyadenosine + L-methionine + A + S-adenosyl-L-homocysteine + 2 H(+). In terms of biological role, catalyzes the methylthiolation of N6-(dimethylallyl)adenosine (i(6)A), leading to the formation of 2-methylthio-N6-(dimethylallyl)adenosine (ms(2)i(6)A) at position 37 in tRNAs that read codons beginning with uridine. This is tRNA-2-methylthio-N(6)-dimethylallyladenosine synthase from Malacoplasma penetrans (strain HF-2) (Mycoplasma penetrans).